The following is a 152-amino-acid chain: Large ribosomal subunit protein bL9 (152 aa).

The protein belongs to the bacterial ribosomal protein bL9 family.

Its function is as follows. Binds to the 23S rRNA. The polypeptide is Large ribosomal subunit protein bL9 (Synechococcus sp. (strain CC9311)).